Reading from the N-terminus, the 470-residue chain is 5-hydroxytryptamine receptor 2A (470 aa).

At 1 to 80 (MDVLCEENTS…LQEKNWSALL (80 aa)) the chain is on the extracellular side. N-linked (GlcNAc...) asparagine glycosylation is found at Asn-8, Asn-38, Asn-44, Asn-51, Asn-54, and Asn-75. The helical transmembrane segment at 81–97 (TAVVIILTIAGNILVIM) threads the bilayer. Topologically, residues 98–111 (AVSLEKKLQNATNY) are cytoplasmic. A helical membrane pass occupies residues 112 to 137 (FLMSLAIADMLLGFLVMPVSMLTILY). The Extracellular portion of the chain corresponds to 138 to 146 (GYRWPLPSK). The helical transmembrane segment at 147-171 (LCAVWIYLDVLFSTASIMHLCAISL) threads the bilayer. A disulfide bond links Cys-148 and Cys-227. Serotonin is bound at residue Asp-155. A DRY motif; important for ligand-induced conformation changes motif is present at residues 172-174 (DRY). Residues 172-191 (DRYVAIQNPIHHRRFNSRTK) lie on the Cytoplasmic side of the membrane. Residues 192-215 (AFLKIIAVWTISVGISMPIPVFGL) traverse the membrane as a helical segment. Topologically, residues 216 to 232 (QDDSKVFKEGSCLLADD) are extracellular. Residues 233–258 (NFVLIGSFVSFFIPLTIMVITYFLTI) traverse the membrane as a helical segment. Residues 259 to 321 (KSLQKEATLC…QSISNEQKAC (63 aa)) lie on the Cytoplasmic side of the membrane. Ser-280 is subject to Phosphoserine. The chain crosses the membrane as a helical span at residues 322 to 347 (KVLGIVFFLFVVMWCPFFITNIMAVI). Asn-342 contributes to the serotonin binding site. A disulfide bridge connects residues Cys-348 and Cys-352. The Extracellular portion of the chain corresponds to 348–355 (CKESCNED). The helical transmembrane segment at 356–381 (VIGALLNVFVWIGYLSSAVNPLVYTL) threads the bilayer. The NPxxY motif; important for ligand-induced conformation changes and signaling signature appears at 375 to 379 (NPLVY). Residues 382–470 (FNKTYRSAFS…NTVNEKVSCV (89 aa)) are Cytoplasmic-facing. The tract at residues 448–470 (GKQHSEDAPADNSNTVNEKVSCV) is disordered. Residues 458–470 (DNSNTVNEKVSCV) are compositionally biased toward polar residues. The PDZ-binding motif lies at 468-470 (SCV).

Belongs to the G-protein coupled receptor 1 family. In terms of assembly, interacts (via C-terminus) with MPDZ and PATJ. May interact (via C-terminus) with MPP3, PRDX6, DLG4, DLG1, CASK, APBA1 and MAGI2. Interacts with GRM2 and DRD2; this may affect signaling.

It is found in the cell membrane. Its subcellular location is the cell projection. It localises to the dendrite. The protein localises to the axon. The protein resides in the cytoplasmic vesicle. It is found in the membrane. Its subcellular location is the caveola. It localises to the presynapse. G-protein coupled receptor activity is regulated by lipids: oleamide increases HTR2A-mediated activity. In terms of biological role, G-protein coupled receptor for 5-hydroxytryptamine (serotonin). Also functions as a receptor for various drugs and psychoactive substances, including mescaline, psilocybin, 1-(2,5-dimethoxy-4-iodophenyl)-2-aminopropane (DOI) and lysergic acid diethylamide (LSD). Ligand binding causes a conformation change that triggers signaling via guanine nucleotide-binding proteins (G proteins) and modulates the activity of downstream effectors. HTR2A is coupled to G(q)/G(11) G alpha proteins and activates phospholipase C-beta, releasing diacylglycerol (DAG) and inositol 1,4,5-trisphosphate (IP3) second messengers that modulate the activity of phosphatidylinositol 3-kinase and promote the release of Ca(2+) ions from intracellular stores, respectively. Beta-arrestin family members inhibit signaling via G proteins and mediate activation of alternative signaling pathways. Affects neural activity, perception, cognition and mood. Plays a role in the regulation of behavior, including responses to anxiogenic situations and psychoactive substances. Plays a role in intestinal smooth muscle contraction, and may play a role in arterial vasoconstriction. This is 5-hydroxytryptamine receptor 2A (HTR2A) from Sus scrofa (Pig).